A 988-amino-acid chain; its full sequence is MGFMSAKLFPSCESMCVCCPALRPSSRRPVKRYKKLLAEIFPKTPDGLPNERKIMKLCEYAAKNPLRIPKIAKFLEQRSHKELRSAHVNFIKIITEAYSKLLFICKEQMAYFAISLVNVLTELLESKQENIHILGCQTLAKFIYSQVDNTYARNIESLVRKVCVLSRQQGVEHSLLRAASLQCLSAMIWFMKEHSYIFVDFDEIVQSVLENYRVEESAAGDEERHAPQHNWVDEIVRREGRAGLGGGNDVNCNSTAIRLRSARDSSALTREERESPEVWAHICVQKLAELAKESTTMRRILDPMLSYFDKKKQWAPRQGLALLVLSDMSYLEKSSGNEQLILTSVIRHLDHKNVLYDPQIKSDMIQTATLLARQLRSRGIAAELVVAGDLCRHLRKTLEAMESASIEELNLNESLQNFLQDCLLEVVTGINDVRPLYDMMAITLENLPSMPVVARASIGSLLILSHIISLTSMSLNAPMLFPEALLQQILKSMVHPDVDTRVGAHHMFSAVIVQGPSRQRSESDFLYETKKWQSRTTSVFASATALLEKLRREKESLGSDKTGNMDDEKEKSISEEENKHVWARKNSAYFSKLVFSFTDRYAALTSSAEEANIVMLTEDQKNQLLSAFWVQAIQTDNTPFNYEAIGHSYSLTVISSRLKDSRNSNNIQFFQLPLSLRSVSLTSNGVLSPSCQRSIFTLATSMLAFAGKVCHITELFDVLRCFTSCNMDPYLRIGEDLQLYVRLQSDLGNYGSDSDQEIARSVLSDCRTKVGINDQRVLDVVACALCNLTEMDKDVLVKELTEMFTPEEVPLFGSNSAFDWANFHVQAFSDESLSFDEECSRTSSVDGGLHESPITNTGSSISKTTMPQSVPRVLGVGQLLESALHVAGQVAGASVSTSPLPYGTMTSQCEALGSGTRKKLSSWLVNGHDSTPDNPAPSLPSAQHFIIPKVNSCGFESSIRTTLEPCSAVKLPPASPFDNFLKAAYRAQ.

The segment at 844 to 865 (SVDGGLHESPITNTGSSISKTT) is disordered. Residues 853–865 (PITNTGSSISKTT) show a composition bias toward polar residues.

As to expression, expressed in root tips, and in the vascular bundles of leaf blades, leaf sheaths, and roots, especially in their sclerenchymatous cells.

The protein localises to the nucleus. Its subcellular location is the cytoplasm. In terms of biological role, functions in regulating leaf rolling through abaxial side leaf cell differentiation. May be involved in the transdifferentiation process from mesophyll cells to sclerenchymatous cells. In Oryza sativa subsp. japonica (Rice), this protein is Protein SEMI-ROLLED LEAF 2.